A 43-amino-acid chain; its full sequence is METATLVTISISCLLVSFTGYAIYTSFGRPSEQLRDPFEDHED.

The helical transmembrane segment at 5 to 27 (TLVTISISCLLVSFTGYAIYTSF) threads the bilayer.

Belongs to the PsbN family.

It localises to the plastid. The protein localises to the chloroplast thylakoid membrane. In terms of biological role, may play a role in photosystem I and II biogenesis. The polypeptide is Protein PsbN (Welwitschia mirabilis (Tree tumbo)).